Consider the following 337-residue polypeptide: MRVLGIETSCDETGVAVYDDEQGLLSHTLYSQVKLHADYGGVVPELASRDHVRKIVPLVKQALADANCTLDDIDGVAYTKGPGLVGALLVGACMGRALAYSWGKPAVGVHHMEGHLLAPMLEDDVPEFPFLALLVSGGHSMLVGVEGIGQYEVLGESVDDAAGEAFDKTAKLMGLDYPGGPRLSKLAAKGETGHYRFPRPMTDRPGLDFSFSGLKTFAANTIAKEPDDEQTRANIARAFEEAVVDTLSIKCRRALKQTGYKRLVVAGGVSANTRLRTTLAETMQAQGGQVYYPRGEFCTDNGAMIAYAGLQRLKAGHIEDLGVKGEPRWPLDTLPAV.

Residues His111 and His115 each coordinate Fe cation. Substrate contacts are provided by residues Leu134–Gly138, Asp167, Gly180, and Asn272. Asp300 lines the Fe cation pocket.

Belongs to the KAE1 / TsaD family. It depends on Fe(2+) as a cofactor.

It localises to the cytoplasm. The catalysed reaction is L-threonylcarbamoyladenylate + adenosine(37) in tRNA = N(6)-L-threonylcarbamoyladenosine(37) in tRNA + AMP + H(+). In terms of biological role, required for the formation of a threonylcarbamoyl group on adenosine at position 37 (t(6)A37) in tRNAs that read codons beginning with adenine. Is involved in the transfer of the threonylcarbamoyl moiety of threonylcarbamoyl-AMP (TC-AMP) to the N6 group of A37, together with TsaE and TsaB. TsaD likely plays a direct catalytic role in this reaction. This Shewanella sediminis (strain HAW-EB3) protein is tRNA N6-adenosine threonylcarbamoyltransferase.